The chain runs to 576 residues: Potassium-transporting ATPase potassium-binding subunit (576 aa).

12 helical membrane passes run 4-24 (QAWI…WPLG), 65-85 (AYAL…YALQ), 136-156 (ALGV…FALI), 179-199 (VYVL…QGVI), 257-277 (LSNF…VFAF), 288-308 (GALL…VTSL), 341-361 (FGIA…CGAV), 371-391 (LGGA…GGVG), 393-413 (GLYG…LMIG), 430-450 (MTAV…AVAL), 497-517 (LLLA…VLAI), and 540-560 (LFVV…YVPA).

Belongs to the KdpA family. As to quaternary structure, the system is composed of three essential subunits: KdpA, KdpB and KdpC.

It localises to the cell inner membrane. In terms of biological role, part of the high-affinity ATP-driven potassium transport (or Kdp) system, which catalyzes the hydrolysis of ATP coupled with the electrogenic transport of potassium into the cytoplasm. This subunit binds the periplasmic potassium ions and delivers the ions to the membrane domain of KdpB through an intramembrane tunnel. The sequence is that of Potassium-transporting ATPase potassium-binding subunit from Methylibium petroleiphilum (strain ATCC BAA-1232 / LMG 22953 / PM1).